A 500-amino-acid polypeptide reads, in one-letter code: Recombining binding protein suppressor of hairless (500 aa).

A disordered region spans residues 1–30 (MDHTEGSPAEEPPAHAPSPGKFGERPPPKR). DNA-binding stretches follow at residues 57–67 (QKSYGNEKRFF) and 165–170 (SKPSKK). Lys175 is modified (N6-acetyllysine). The interval 192–197 (RLRSQT) is DNA-binding. In terms of domain architecture, IPT/TIG spans 355 to 445 (PVVESLQLNG…YSTSLTFTYT (91 aa)). Residues 465–481 (SSQVPPNESNTNSEGSY) show a composition bias toward polar residues. A disordered region spans residues 465 to 500 (SSQVPPNESNTNSEGSYTNASTNSTSVTSSTATVVS). Residues 482-500 (TNASTNSTSVTSSTATVVS) show a composition bias toward low complexity.

It belongs to the Su(H) family. In terms of assembly, interacts with activated NOTCH1, NOTCH2 or NOTCH3. Interacts with MINT/SHARP. This interaction may mediate the recruitment of large corepressor complexes containing proteins such as HDAC1, HDAC2, NCOR2, SAP30, FHL1/KYOT2 and CIR1. Interacts with EP300, MAML1 and PTF1A. Interacts with RITA1/C12orf52, leading to nuclear export, prevent the interaction between RBPJ and NICD product and subsequent down-regulation of the Notch signaling pathway. Interacts with SNW1. Interacts with CHCHD2 and CXXC5. Interacts with BEND6 (via BEN domain). Interacts with NKAPL. Interacts with ZMIZ1. Interacts with RBM15. Interacts with L3MBTL3 and KDM1A; the interaction with KDM1A is weaker in the absence of L3MBTL3 and the interaction with L3MBTL3 is impaired by Notch-derived peptide containing the intracellular domain (NICD). (Microbial infection) Interacts with EBV EBNA2. Interacts with EBV EBNA3. Interacts with EBV EBNA4. Interacts with EBV EBNA6 (via N-terminus).

Its subcellular location is the nucleus. The protein localises to the cytoplasm. Transcriptional regulator that plays a central role in Notch signaling, a signaling pathway involved in cell-cell communication that regulates a broad spectrum of cell-fate determinations. Acts as a transcriptional repressor when it is not associated with Notch proteins. When associated with some NICD product of Notch proteins (Notch intracellular domain), it acts as a transcriptional activator that activates transcription of Notch target genes. Probably represses or activates transcription via the recruitment of chromatin remodeling complexes containing histone deacetylase or histone acetylase proteins, respectively. Specifically binds to the immunoglobulin kappa-type J segment recombination signal sequence. Binds specifically to methylated DNA. Binds to the oxygen responsive element of COX4I2 and activates its transcription under hypoxia conditions (4% oxygen). Negatively regulates the phagocyte oxidative burst in response to bacterial infection by repressing transcription of NADPH oxidase subunits. This Homo sapiens (Human) protein is Recombining binding protein suppressor of hairless.